A 467-amino-acid chain; its full sequence is 3-isopropylmalate dehydratase large subunit (467 aa).

Residues Cys-348, Cys-409, and Cys-412 each coordinate [4Fe-4S] cluster.

Belongs to the aconitase/IPM isomerase family. LeuC type 1 subfamily. As to quaternary structure, heterodimer of LeuC and LeuD. Requires [4Fe-4S] cluster as cofactor.

The catalysed reaction is (2R,3S)-3-isopropylmalate = (2S)-2-isopropylmalate. It participates in amino-acid biosynthesis; L-leucine biosynthesis; L-leucine from 3-methyl-2-oxobutanoate: step 2/4. In terms of biological role, catalyzes the isomerization between 2-isopropylmalate and 3-isopropylmalate, via the formation of 2-isopropylmaleate. This is 3-isopropylmalate dehydratase large subunit from Magnetococcus marinus (strain ATCC BAA-1437 / JCM 17883 / MC-1).